Reading from the N-terminus, the 186-residue chain is ATP synthase subunit delta (186 aa).

It belongs to the ATPase delta chain family. In terms of assembly, F-type ATPases have 2 components, F(1) - the catalytic core - and F(0) - the membrane proton channel. F(1) has five subunits: alpha(3), beta(3), gamma(1), delta(1), epsilon(1). F(0) has three main subunits: a(1), b(2) and c(10-14). The alpha and beta chains form an alternating ring which encloses part of the gamma chain. F(1) is attached to F(0) by a central stalk formed by the gamma and epsilon chains, while a peripheral stalk is formed by the delta and b chains.

Its subcellular location is the cell inner membrane. Functionally, f(1)F(0) ATP synthase produces ATP from ADP in the presence of a proton or sodium gradient. F-type ATPases consist of two structural domains, F(1) containing the extramembraneous catalytic core and F(0) containing the membrane proton channel, linked together by a central stalk and a peripheral stalk. During catalysis, ATP synthesis in the catalytic domain of F(1) is coupled via a rotary mechanism of the central stalk subunits to proton translocation. In terms of biological role, this protein is part of the stalk that links CF(0) to CF(1). It either transmits conformational changes from CF(0) to CF(1) or is implicated in proton conduction. The chain is ATP synthase subunit delta from Leptospira borgpetersenii serovar Hardjo-bovis (strain JB197).